Consider the following 211-residue polypeptide: Large ribosomal subunit protein uL4 (211 aa).

The segment at 48 to 89 is disordered; it reads KRAGTASTKTRVEVRGGGAKPWRQKGTGRARAGSRTSPLWRG.

Belongs to the universal ribosomal protein uL4 family. As to quaternary structure, part of the 50S ribosomal subunit.

One of the primary rRNA binding proteins, this protein initially binds near the 5'-end of the 23S rRNA. It is important during the early stages of 50S assembly. It makes multiple contacts with different domains of the 23S rRNA in the assembled 50S subunit and ribosome. In terms of biological role, forms part of the polypeptide exit tunnel. This chain is Large ribosomal subunit protein uL4, found in Desulfotalea psychrophila (strain LSv54 / DSM 12343).